The chain runs to 856 residues: Phosphoenolpyruvate synthase (856 aa).

His433 functions as the Tele-phosphohistidine intermediate in the catalytic mechanism. Residues Arg523, Arg636, Glu738, Gly759, Ser760, Asn761, and Asp762 each coordinate substrate. Glu738 serves as a coordination point for Mg(2+). Residue Asp762 participates in Mg(2+) binding. Cys809 (proton donor) is an active-site residue.

It belongs to the PEP-utilizing enzyme family. It depends on Mg(2+) as a cofactor.

The catalysed reaction is pyruvate + ATP + H2O = phosphoenolpyruvate + AMP + phosphate + 2 H(+). It functions in the pathway carbohydrate biosynthesis; gluconeogenesis. In terms of biological role, catalyzes the phosphorylation of pyruvate to phosphoenolpyruvate. In Aquifex aeolicus (strain VF5), this protein is Phosphoenolpyruvate synthase (ppsA).